The chain runs to 103 residues: MAAKIRQNDEVIVLTGKDKGKRGKVTQMLPNGKVIVEGVKIITKHEKPVPALGKAGGLVKKEAAIDASNIAIFNPKTNKADRVGFRFEDGKKVRFFKSNNEII.

The protein belongs to the universal ribosomal protein uL24 family. Part of the 50S ribosomal subunit.

Functionally, one of two assembly initiator proteins, it binds directly to the 5'-end of the 23S rRNA, where it nucleates assembly of the 50S subunit. In terms of biological role, one of the proteins that surrounds the polypeptide exit tunnel on the outside of the subunit. This is Large ribosomal subunit protein uL24 from Actinobacillus pleuropneumoniae serotype 3 (strain JL03).